The sequence spans 287 residues: 23S rRNA (uridine(2479)-2'-O)-methyltransferase (287 aa).

Residues 210–211, glycine 232, and 252–254 contribute to the S-adenosyl-L-methionine site; these read TD and IPM.

Belongs to the class IV-like SAM-binding methyltransferase superfamily. RNA methyltransferase TsnR/AvirB family. In terms of assembly, homodimer.

It catalyses the reaction uridine(2479) in 23S rRNA + S-adenosyl-L-methionine = 2'-O-methyluridine(2479) in 23S rRNA + S-adenosyl-L-homocysteine + H(+). In terms of biological role, specifically methylates the 2'-O-ribose position of uridine-2479 in 23S ribosomal RNA. Confers resistance to antibiotic avilamycin, an orthosomycin antibiotic. This is 23S rRNA (uridine(2479)-2'-O)-methyltransferase (aviRb) from Streptomyces viridochromogenes.